Here is a 385-residue protein sequence, read N- to C-terminus: Glutamate 5-kinase (385 aa).

Residue K17 participates in ATP binding. 3 residues coordinate substrate: S64, D151, and N165. 185 to 186 (SD) is an ATP binding site. A PUA domain is found at 291–367 (SGTVRVDAGA…DQIENVLGYS (77 aa)).

This sequence belongs to the glutamate 5-kinase family.

The protein resides in the cytoplasm. The enzyme catalyses L-glutamate + ATP = L-glutamyl 5-phosphate + ADP. It functions in the pathway amino-acid biosynthesis; L-proline biosynthesis; L-glutamate 5-semialdehyde from L-glutamate: step 1/2. Functionally, catalyzes the transfer of a phosphate group to glutamate to form L-glutamate 5-phosphate. This Methanosarcina mazei (strain ATCC BAA-159 / DSM 3647 / Goe1 / Go1 / JCM 11833 / OCM 88) (Methanosarcina frisia) protein is Glutamate 5-kinase.